A 451-amino-acid chain; its full sequence is Phosphoglucosamine mutase (451 aa).

Catalysis depends on S101, which acts as the Phosphoserine intermediate. Mg(2+)-binding residues include S101, D242, D244, and D246. S101 bears the Phosphoserine mark.

Belongs to the phosphohexose mutase family. Mg(2+) serves as cofactor. Activated by phosphorylation.

It carries out the reaction alpha-D-glucosamine 1-phosphate = D-glucosamine 6-phosphate. Its function is as follows. Catalyzes the conversion of glucosamine-6-phosphate to glucosamine-1-phosphate. This is Phosphoglucosamine mutase from Beijerinckia indica subsp. indica (strain ATCC 9039 / DSM 1715 / NCIMB 8712).